Reading from the N-terminus, the 241-residue chain is Uridylate kinase (241 aa).

14 to 17 is an ATP binding site; the sequence is KLSG. The tract at residues 22-27 is involved in allosteric activation by GTP; sequence GNQGFG. Glycine 56 lines the UMP pocket. 2 residues coordinate ATP: glycine 57 and arginine 61. Residues aspartate 76 and 137 to 144 contribute to the UMP site; that span reads TGNPYFTT. Residues threonine 164, tyrosine 170, and aspartate 173 each contribute to the ATP site.

Belongs to the UMP kinase family. Homohexamer.

The protein resides in the cytoplasm. The catalysed reaction is UMP + ATP = UDP + ADP. It participates in pyrimidine metabolism; CTP biosynthesis via de novo pathway; UDP from UMP (UMPK route): step 1/1. Allosterically activated by GTP. Inhibited by UTP. In terms of biological role, catalyzes the reversible phosphorylation of UMP to UDP. This chain is Uridylate kinase, found in Syntrophotalea carbinolica (strain DSM 2380 / NBRC 103641 / GraBd1) (Pelobacter carbinolicus).